Consider the following 100-residue polypeptide: Urease subunit gamma (100 aa).

It belongs to the urease gamma subunit family. Heterotrimer of UreA (gamma), UreB (beta) and UreC (alpha) subunits. Three heterotrimers associate to form the active enzyme.

It localises to the cytoplasm. The catalysed reaction is urea + 2 H2O + H(+) = hydrogencarbonate + 2 NH4(+). It functions in the pathway nitrogen metabolism; urea degradation; CO(2) and NH(3) from urea (urease route): step 1/1. This Actinobacillus pleuropneumoniae (Haemophilus pleuropneumoniae) protein is Urease subunit gamma.